The primary structure comprises 497 residues: Glycine receptor subunit beta (497 aa).

A signal peptide spans 1–22; the sequence is MKFLLTTAFLILISLWVEEAYS. The Extracellular segment spans residues 23–268; that stretch reads KEKSSKKGKG…IFTLRRQVGF (246 aa). The N-linked (GlcNAc...) asparagine glycan is linked to Asn54. The glycine site is built by Arg108 and Ser174. Residues Cys183 and Cys197 are joined by a disulfide bond. Asn242 is a glycosylation site (N-linked (GlcNAc...) asparagine). Cys243 and Cys255 are joined by a disulfide. Thr250 contributes to the glycine binding site. Residues 269-289 traverse the membrane as a helical segment; that stretch reads YMMGVYAPTLLIVVLSWLSFW. The Cytoplasmic segment spans residues 290–294; that stretch reads INPDA. Residues 295 to 315 form a helical membrane-spanning segment; sequence SAARVPLGIFSVLSLASECTT. Over 316–327 the chain is Extracellular; sequence LAAELPKVSYVK. Residues 328-349 traverse the membrane as a helical segment; sequence ALDVWLIACLLFGFASLVEYAV. At 350 to 472 the chain is on the cytoplasmic side; sequence VQVMLNNPKR…KPVIPTAAKR (123 aa). Thr391 is subject to Phosphothreonine. The chain crosses the membrane as a helical span at residues 473-496; it reads IDLYARALFPFCFLFFNVIYWSIY.

It belongs to the ligand-gated ion channel (TC 1.A.9) family. Glycine receptor (TC 1.A.9.3) subfamily. GLRB sub-subfamily. As to quaternary structure, forms heteropentamers with glycin receptor alpha subunits. Heteropentamers with GLRA1 can be composed of two GLRA1 and three GLRB subunits, or three GLRA1 and two GLRB subunits, or four GLRA1 subunits and one GLRB subunit. Forms heteropentamers with GLRA2. Functional GLRB-GLRA2 heteropentamers contain four GLRA2 subunits and one GLRB subunit, although alternative subunit composition cannot be excluded. Forms a heteropentamer with GLRA3. Interacts with GPHN.

The protein localises to the postsynaptic cell membrane. The protein resides in the synapse. It is found in the cell projection. It localises to the dendrite. Its subcellular location is the cell membrane. The protein localises to the cytoplasm. The catalysed reaction is chloride(in) = chloride(out). Channel opening is triggered by extracellular glycine. Heteropentameric channels composed of GLRB and GLRA1 are activated by lower glycine levels than homopentameric GLRA1. Subunit of heteromeric glycine-gated chloride channels. Plays an important role in the down-regulation of neuronal excitability. Contributes to the generation of inhibitory postsynaptic currents. This chain is Glycine receptor subunit beta (GLRB), found in Homo sapiens (Human).